A 624-amino-acid polypeptide reads, in one-letter code: Galactan 5-O-arabinofuranosyltransferase (624 aa).

13 helical membrane passes run 5–25 (VLGQMVLAVLMASAVAGVAIA), 43–63 (ALTTVGQFGCLAGLFAAGLLW), 73–93 (LGALAFISAFSVVTLAMPLGA), 127–147 (IGLPPFYPAGWFWLGGRIAAA), 159–179 (WSIVSITIAVALALVLWAAMI), 181–201 (FEYALVATAASTAAMLAYAST), 203–223 (PYAAIITVLMPPVFVLAWAGL), 234–254 (AIVGVGIFLGVAALFYTLLLV), 280–300 (LAVIAVISGAIALLTWAPYLL), 326–346 (FPMFSLTLHGALCMLGTVWLV), 355–375 (AGALAVAVVAVYAWSLLSMLT), 391–411 (LTVLLTTAGAFGFIEATLAIA), and 422–442 (VVAAATAVGAIGAVTFSQDIP).

It belongs to the glycosyltransferase 85 family.

It is found in the cell membrane. It catalyses the reaction Adds an alpha-D-arabinofuranosyl group from trans,octacis-decaprenylphospho-beta-D-arabinofuranose at the 5-O-position of the eighth, tenth and twelfth galactofuranose unit of the galactofuranan chain of [beta-D-galactofuranosyl-(1-&gt;5)-beta-D-galactofuranosyl-(1-&gt;6)]14-beta-D-galactofuranosyl-(1-&gt;5)-beta-D-galactofuranosyl-(1-&gt;4)-alpha-L-rhamnopyranosyl-(1-&gt;3)-N-acetyl-alpha-D-glucosaminyl-diphospho-trans,octacis-decaprenol.. It functions in the pathway cell wall biogenesis; cell wall polysaccharide biosynthesis. Involved in the biosynthesis of the arabinogalactan (AG) region of the mycolylarabinogalactan-peptidoglycan (mAGP) complex, an essential component of the mycobacterial cell wall. Catalyzes the addition of the first key arabinofuranosyl (Araf) residue from the sugar donor decaprenyl-phospho-arabinose (DPA) on the C-5 of a 6-linked galactofuranosyl (Galf) of the galactan domain, thus 'priming' the galactan for further elaboration by other arabinofuranosyltransferases. It is not able to add an Araf residue to a terminal Galf. In Mycolicibacterium smegmatis (strain ATCC 700084 / mc(2)155) (Mycobacterium smegmatis), this protein is Galactan 5-O-arabinofuranosyltransferase.